The chain runs to 246 residues: Adenosylcobinamide-GDP ribazoletransferase (246 aa).

A run of 6 helical transmembrane segments spans residues Ile34–Leu54, Cys59–Phe79, Gly113–Leu133, Ile136–Leu156, Thr181–Leu201, and Ala203–Gly223.

Belongs to the CobS family. It depends on Mg(2+) as a cofactor.

It is found in the cell inner membrane. It carries out the reaction alpha-ribazole + adenosylcob(III)inamide-GDP = adenosylcob(III)alamin + GMP + H(+). The enzyme catalyses alpha-ribazole 5'-phosphate + adenosylcob(III)inamide-GDP = adenosylcob(III)alamin 5'-phosphate + GMP + H(+). It participates in cofactor biosynthesis; adenosylcobalamin biosynthesis; adenosylcobalamin from cob(II)yrinate a,c-diamide: step 7/7. Joins adenosylcobinamide-GDP and alpha-ribazole to generate adenosylcobalamin (Ado-cobalamin). Also synthesizes adenosylcobalamin 5'-phosphate from adenosylcobinamide-GDP and alpha-ribazole 5'-phosphate. The protein is Adenosylcobinamide-GDP ribazoletransferase of Klebsiella pneumoniae subsp. pneumoniae (strain ATCC 700721 / MGH 78578).